Consider the following 178-residue polypeptide: Large ribosomal subunit protein uL6 (178 aa).

Belongs to the universal ribosomal protein uL6 family. Part of the 50S ribosomal subunit.

In terms of biological role, this protein binds to the 23S rRNA, and is important in its secondary structure. It is located near the subunit interface in the base of the L7/L12 stalk, and near the tRNA binding site of the peptidyltransferase center. This Campylobacter fetus subsp. fetus (strain 82-40) protein is Large ribosomal subunit protein uL6.